The primary structure comprises 364 residues: Chorismate synthase (364 aa).

Positions 41-60 (MQHDLDRRRPGTSRYTTARR) are disordered. NADP(+) is bound by residues R48 and R54. FMN-binding positions include 125-127 (RSS), 238-239 (NA), G278, 293-297 (KPTSS), and R319.

Belongs to the chorismate synthase family. In terms of assembly, homotetramer. FMNH2 is required as a cofactor.

It carries out the reaction 5-O-(1-carboxyvinyl)-3-phosphoshikimate = chorismate + phosphate. The protein operates within metabolic intermediate biosynthesis; chorismate biosynthesis; chorismate from D-erythrose 4-phosphate and phosphoenolpyruvate: step 7/7. Functionally, catalyzes the anti-1,4-elimination of the C-3 phosphate and the C-6 proR hydrogen from 5-enolpyruvylshikimate-3-phosphate (EPSP) to yield chorismate, which is the branch point compound that serves as the starting substrate for the three terminal pathways of aromatic amino acid biosynthesis. This reaction introduces a second double bond into the aromatic ring system. The protein is Chorismate synthase of Shewanella sp. (strain MR-4).